The following is a 144-amino-acid chain: 3-hydroxyacyl-[acyl-carrier-protein] dehydratase FabZ (144 aa).

Histidine 47 is a catalytic residue.

It belongs to the thioester dehydratase family. FabZ subfamily.

The protein localises to the cytoplasm. It carries out the reaction a (3R)-hydroxyacyl-[ACP] = a (2E)-enoyl-[ACP] + H2O. Involved in unsaturated fatty acids biosynthesis. Catalyzes the dehydration of short chain beta-hydroxyacyl-ACPs and long chain saturated and unsaturated beta-hydroxyacyl-ACPs. In Dechloromonas aromatica (strain RCB), this protein is 3-hydroxyacyl-[acyl-carrier-protein] dehydratase FabZ.